We begin with the raw amino-acid sequence, 188 residues long: dCTP deaminase (188 aa).

DCTP is bound by residues 111 to 116, 135 to 137, Gln-156, Tyr-170, and Gln-180; these read KSTYAR and TLE. Glu-137 acts as the Proton donor/acceptor in catalysis.

The protein belongs to the dCTP deaminase family. In terms of assembly, homotrimer.

The catalysed reaction is dCTP + H2O + H(+) = dUTP + NH4(+). The protein operates within pyrimidine metabolism; dUMP biosynthesis; dUMP from dCTP (dUTP route): step 1/2. In terms of biological role, catalyzes the deamination of dCTP to dUTP. The polypeptide is dCTP deaminase (Pseudomonas putida (strain W619)).